A 152-amino-acid polypeptide reads, in one-letter code: Transcriptional regulator MraZ (152 aa).

SpoVT-AbrB domains are found at residues 5-52 (ATLV…PLPE) and 81-124 (ASEC…DETT).

This sequence belongs to the MraZ family. Forms oligomers.

Its subcellular location is the cytoplasm. The protein resides in the nucleoid. In terms of biological role, negatively regulates its own expression and that of the subsequent genes in the proximal part of the division and cell wall (dcw) gene cluster. Acts by binding directly to DNA. May also regulate the expression of genes outside the dcw cluster. In Klebsiella pneumoniae subsp. pneumoniae (strain ATCC 700721 / MGH 78578), this protein is Transcriptional regulator MraZ.